Consider the following 142-residue polypeptide: Large ribosomal subunit protein uL13 (142 aa).

The protein belongs to the universal ribosomal protein uL13 family. In terms of assembly, part of the 50S ribosomal subunit.

Its function is as follows. This protein is one of the early assembly proteins of the 50S ribosomal subunit, although it is not seen to bind rRNA by itself. It is important during the early stages of 50S assembly. This Erwinia tasmaniensis (strain DSM 17950 / CFBP 7177 / CIP 109463 / NCPPB 4357 / Et1/99) protein is Large ribosomal subunit protein uL13.